A 156-amino-acid chain; its full sequence is ATP synthase subunit b (156 aa).

The chain crosses the membrane as a helical span at residues 11–31; that stretch reads AIAFVIFVWFCMKYVWPPLMA.

Belongs to the ATPase B chain family. F-type ATPases have 2 components, F(1) - the catalytic core - and F(0) - the membrane proton channel. F(1) has five subunits: alpha(3), beta(3), gamma(1), delta(1), epsilon(1). F(0) has three main subunits: a(1), b(2) and c(10-14). The alpha and beta chains form an alternating ring which encloses part of the gamma chain. F(1) is attached to F(0) by a central stalk formed by the gamma and epsilon chains, while a peripheral stalk is formed by the delta and b chains.

The protein resides in the cell inner membrane. Its function is as follows. F(1)F(0) ATP synthase produces ATP from ADP in the presence of a proton or sodium gradient. F-type ATPases consist of two structural domains, F(1) containing the extramembraneous catalytic core and F(0) containing the membrane proton channel, linked together by a central stalk and a peripheral stalk. During catalysis, ATP synthesis in the catalytic domain of F(1) is coupled via a rotary mechanism of the central stalk subunits to proton translocation. Component of the F(0) channel, it forms part of the peripheral stalk, linking F(1) to F(0). This chain is ATP synthase subunit b, found in Klebsiella pneumoniae (strain 342).